A 473-amino-acid chain; its full sequence is BPI fold-containing family B member 3 (473 aa).

A signal peptide spans 1-20 (MMPGVYALLLLWGLATPCLG). Asparagine 139 is a glycosylation site (N-linked (GlcNAc...) asparagine). Cysteines 161 and 196 form a disulfide.

The protein belongs to the BPI/LBP/Plunc superfamily. BPI/LBP family. In terms of tissue distribution, highly expressed in olfactory mucosa but undetectable in thymus, kidney, lung, brain, spleen and liver.

It is found in the secreted. In terms of biological role, may have the capacity to recognize and bind specific classes of odorants. May act as a carrier molecule, transporting odorants across the mucus layer to access receptor sites. May serve as a primary defense mechanism by recognizing and removing potentially harmful odorants or pathogenic microorganisms from the mucosa or clearing excess odorant from mucus to enable new odorant stimuli to be received. The protein is BPI fold-containing family B member 3 of Rattus norvegicus (Rat).